The chain runs to 589 residues: Aspartate--tRNA ligase (589 aa).

Residue E172 participates in L-aspartate binding. The interval 196–199 (QLFK) is aspartate. R218 is a binding site for L-aspartate. Residues 218-220 (RDE) and Q227 contribute to the ATP site. Residue H449 coordinates L-aspartate. Residue E483 participates in ATP binding. Position 490 (R490) interacts with L-aspartate. Position 535 to 538 (535 to 538 (GLDR)) interacts with ATP.

Belongs to the class-II aminoacyl-tRNA synthetase family. Type 1 subfamily. In terms of assembly, homodimer.

It localises to the cytoplasm. The enzyme catalyses tRNA(Asp) + L-aspartate + ATP = L-aspartyl-tRNA(Asp) + AMP + diphosphate. In terms of biological role, catalyzes the attachment of L-aspartate to tRNA(Asp) in a two-step reaction: L-aspartate is first activated by ATP to form Asp-AMP and then transferred to the acceptor end of tRNA(Asp). The protein is Aspartate--tRNA ligase of Actinobacillus succinogenes (strain ATCC 55618 / DSM 22257 / CCUG 43843 / 130Z).